The primary structure comprises 117 residues: Putative pterin-4-alpha-carbinolamine dehydratase (117 aa).

Belongs to the pterin-4-alpha-carbinolamine dehydratase family.

The catalysed reaction is (4aS,6R)-4a-hydroxy-L-erythro-5,6,7,8-tetrahydrobiopterin = (6R)-L-erythro-6,7-dihydrobiopterin + H2O. This Aeromonas salmonicida (strain A449) protein is Putative pterin-4-alpha-carbinolamine dehydratase.